The sequence spans 407 residues: Proteasome-activating nucleotidase (407 aa).

A coiled-coil region spans residues 22-67 (KEKAYLAELESKVLRLELKNKDITRENVQIKKENEILKRELDKLRI). ATP is bound by residues 192–197 (GTGKTL) and H331. The docks into pockets in the proteasome alpha-ring to cause gate opening stretch occupies residues 405 to 407 (MYG).

The protein belongs to the AAA ATPase family. Homohexamer. The hexameric complex has a two-ring architecture resembling a top hat that caps the 20S proteasome core at one or both ends. Upon ATP-binding, the C-terminus of PAN interacts with the alpha-rings of the proteasome core by binding to the intersubunit pockets.

It is found in the cytoplasm. In terms of biological role, ATPase which is responsible for recognizing, binding, unfolding and translocation of substrate proteins into the archaeal 20S proteasome core particle. Is essential for opening the gate of the 20S proteasome via an interaction with its C-terminus, thereby allowing substrate entry and access to the site of proteolysis. Thus, the C-termini of the proteasomal ATPase function like a 'key in a lock' to induce gate opening and therefore regulate proteolysis. Unfolding activity requires energy from ATP hydrolysis, whereas ATP binding alone promotes ATPase-20S proteasome association which triggers gate opening, and supports translocation of unfolded substrates. The polypeptide is Proteasome-activating nucleotidase (Methanococcus vannielii (strain ATCC 35089 / DSM 1224 / JCM 13029 / OCM 148 / SB)).